The primary structure comprises 1633 residues: Serine-aspartate repeat-containing protein F (1633 aa).

The signal sequence occupies residues 1 to 45 (MKKRRQGPINKRVDFLSNKVNKYSIRKFTVGTASILVGATLMFGA). Residues 46–678 (ADNEAKAAED…GSSTAQGDNP (633 aa)) form a ligand binding A region region. The interval 51–269 (KAAEDNQLES…SISTDSSVND (219 aa)) is disordered. Residues 61–74 (ASKEEQKGSRDNES) are compositionally biased toward basic and acidic residues. 2 stretches are compositionally biased toward polar residues: residues 85 to 99 (GSHSSEKTTNVNNAT) and 146 to 168 (PKTSTTQQDSTEKNNPSLKDNLN). A compositionally biased stretch (basic and acidic residues) spans 175-184 (KESKTDEHST). The span at 186 to 226 (QAQMSTNKSNLDTNDSPTQSEKTSSQANNDSTDNQSAPSKQ) shows a compositional bias: polar residues. Residues 227 to 253 (LDSKPSEQKVYKTKFNDEPTQDVEHTT) are compositionally biased toward basic and acidic residues. The segment covering 255–266 (KLKTPSISTDSS) has biased composition (polar residues). CNA-B domains are found at residues 679–797 (TYSL…YLTP), 798–907 (KYNV…FYKP), 908–1018 (IYNL…YKTP), and 1019–1129 (KYSV…FDDD). A type I collagen binding region region spans residues 679–1129 (TYSLGDYVWL…SIDNGYFDDD (451 aa)). The tract at residues 862–889 (FETPEGYTPTKQNSGSDEGKDSNGTKTT) is disordered. Residues 1085-1608 (KPEGMTQTTA…ANEDHDSKGT (524 aa)) form a disordered region. Basic and acidic residues predominate over residues 1107–1119 (EDVRVTITDHDDF). Acidic residues predominate over residues 1125-1584 (YFDDDSDSDS…DSDSDSDSDS (460 aa)). Over residues 1585–1606 (DSDKNAKDKLPDTGANEDHDSK) the composition is skewed to basic and acidic residues. An LPXTG sorting signal motif is present at residues 1594–1598 (LPDTG). Thr-1597 bears the Pentaglycyl murein peptidoglycan amidated threonine mark. A propeptide spans 1598 to 1633 (GANEDHDSKGTLLGTLFAGLGALLLGRRRKKDNKEK) (removed by sortase).

The protein belongs to the serine-aspartate repeat-containing protein (SDr) family.

It localises to the secreted. It is found in the cell wall. Its function is as follows. Binds to type I collagen via alpha-2(I) or alpha-1(I) chains. The polypeptide is Serine-aspartate repeat-containing protein F (sdrF) (Staphylococcus epidermidis (strain ATCC 12228 / FDA PCI 1200)).